An 887-amino-acid chain; its full sequence is 3-hydroxy-3-methylglutaryl-coenzyme A reductase (887 aa).

The Cytoplasmic portion of the chain corresponds to 1 to 9 (MLSRLFRMH). The helical transmembrane segment at 10–39 (GLFVASHPWEVIVGTVTLTICMMSMNMFTG) threads the bilayer. Topologically, residues 40 to 56 (NNKICGWNYECPKFEED) are lumenal. A helical membrane pass occupies residues 57–78 (VLSSDIIILTITRCIAILYIYF). An SSD domain is found at 61–218 (DIIILTITRC…MTFFPACVSL (158 aa)). Positions 75–78 (YIYF) match the INSIG-binding motif motif. The Cytoplasmic portion of the chain corresponds to 79 to 89 (QFQNLRQLGSK). Residue lysine 89 forms a Glycyl lysine isopeptide (Lys-Gly) (interchain with G-Cter in ubiquitin) linkage. Residues 90–114 (YILGIAGLFTIFSSFVFSTVVIHFL) form a helical membrane-spanning segment. Topologically, residues 115 to 123 (DKELTGLNE) are lumenal. The chain crosses the membrane as a helical span at residues 124–149 (ALPFFLLLIDLSRASALAKFALSSNS). The Cytoplasmic portion of the chain corresponds to 150–159 (QDEVRENIAR). A helical transmembrane segment spans residues 160–187 (GMAILGPTFTLDALVECLVIGVGTMSGV). At 188 to 191 (RQLE) the chain is on the lumenal side. Residues 192–220 (IMCCFGCMSVLANYFVFMTFFPACVSLVL) form a helical membrane-spanning segment. The Cytoplasmic portion of the chain corresponds to 221–248 (ELSRESREGRPIWQLSHFARVLEEEENK). Lysine 248 participates in a covalent cross-link: Glycyl lysine isopeptide (Lys-Gly) (interchain with G-Cter in ubiquitin). A helical transmembrane segment spans residues 249–275 (PNPVTQRVKMIMSLGLVLVHAHSRWIA). Residues 276 to 314 (DPSPQNSTAEQAKVSLGLDEDVSKRIEPSVSLWQFYLSK) are Lumenal-facing. An N-linked (GlcNAc...) asparagine glycan is attached at asparagine 281. A helical membrane pass occupies residues 315 to 339 (MISMDIEQVITLSLAFLLAVKYIFF). Residues 340–887 (EQAETESTLS…LQGTCTKKAA (548 aa)) lie on the Cytoplasmic side of the membrane. Catalysis depends on charge relay system residues glutamate 558, lysine 690, and aspartate 766. Histidine 865 functions as the Proton donor in the catalytic mechanism. Residue serine 871 is modified to Phosphoserine.

It belongs to the HMG-CoA reductase family. In terms of assembly, homotetramer. Homodimer. Interacts (via its SSD) with INSIG1; the interaction, accelerated by sterols, leads to the recruitment of HMGCR to AMFR/gp78 for its ubiquitination by the sterol-mediated ERAD pathway. Interacts with UBIAD1. Post-translationally, undergoes sterol-mediated ubiquitination and ER-associated degradation (ERAD). Accumulation of sterols in the endoplasmic reticulum (ER) membrane, triggers binding of the reductase to the ER membrane protein INSIG1 or INSIG2. The INSIG1 binding leads to the recruitment of the ubiquitin ligase, AMFR/gp78, RNF139 or RNF145, initiating ubiquitination of the reductase. The ubiquitinated reductase is then extracted from the ER membrane and delivered to cytosolic 26S proteosomes by a mechanism probably mediated by the ATPase Valosin-containing protein VCP/p97. The INSIG2-binding leads to the recruitment of the ubiquitin ligase RNF139, initiating ubiquitination of the reductase. Lys-248 is the main site of ubiquitination. Ubiquitination is enhanced by the presence of a geranylgeranylated protein. In terms of processing, N-glycosylated. Deglycosylated by NGLY1 on release from the endoplasmic reticulum (ER) in a sterol-mediated manner. Phosphorylated. Phosphorylation at Ser-871 reduces the catalytic activity.

It localises to the endoplasmic reticulum membrane. The protein resides in the peroxisome membrane. It catalyses the reaction (R)-mevalonate + 2 NADP(+) + CoA = (3S)-3-hydroxy-3-methylglutaryl-CoA + 2 NADPH + 2 H(+). Its pathway is metabolic intermediate biosynthesis; (R)-mevalonate biosynthesis; (R)-mevalonate from acetyl-CoA: step 3/3. Its activity is regulated as follows. Regulated by a negative feedback mechanism through sterols and non-sterol metabolites derived from mevalonate. Phosphorylation at Ser-871 down-regulates the catalytic activity. In terms of biological role, catalyzes the conversion of (3S)-hydroxy-3-methylglutaryl-CoA (HMG-CoA) to mevalonic acid, the rate-limiting step in the synthesis of cholesterol and other isoprenoids, thus plays a critical role in cellular cholesterol homeostasis. In Mus musculus (Mouse), this protein is 3-hydroxy-3-methylglutaryl-coenzyme A reductase (Hmgcr).